The following is a 561-amino-acid chain: Carboxylesterase 4A (561 aa).

Residues 1–20 (MRWILCWSLTLCLMAQTALG) form the signal peptide. Cysteines 88 and 116 form a disulfide. A glycan (N-linked (GlcNAc...) asparagine) is linked at Asn-214. Ser-221 functions as the Acyl-ester intermediate in the catalytic mechanism. Cys-273 and Cys-284 are oxidised to a cystine. Asn-276 carries N-linked (GlcNAc...) asparagine glycosylation. The active-site Charge relay system is Glu-353. The N-linked (GlcNAc...) asparagine glycan is linked to Asn-388. The Charge relay system role is filled by His-467.

The protein belongs to the type-B carboxylesterase/lipase family.

Its subcellular location is the secreted. In terms of biological role, probable carboxylesterase. The polypeptide is Carboxylesterase 4A (CES4A) (Homo sapiens (Human)).